The sequence spans 614 residues: Glutamyl-tRNA(Gln) amidotransferase subunit E (614 aa).

It belongs to the GatB/GatE family. GatE subfamily. In terms of assembly, heterodimer of GatD and GatE.

The catalysed reaction is L-glutamyl-tRNA(Gln) + L-glutamine + ATP + H2O = L-glutaminyl-tRNA(Gln) + L-glutamate + ADP + phosphate + H(+). Functionally, allows the formation of correctly charged Gln-tRNA(Gln) through the transamidation of misacylated Glu-tRNA(Gln) in organisms which lack glutaminyl-tRNA synthetase. The reaction takes place in the presence of glutamine and ATP through an activated gamma-phospho-Glu-tRNA(Gln). The GatDE system is specific for glutamate and does not act on aspartate. The polypeptide is Glutamyl-tRNA(Gln) amidotransferase subunit E (Methanospirillum hungatei JF-1 (strain ATCC 27890 / DSM 864 / NBRC 100397 / JF-1)).